The following is a 153-amino-acid chain: Interleukin-2 (153 aa).

A signal peptide spans 1–20 (MYKVQLLSCIALTLALLTSS). O-linked (GalNAc...) threonine glycosylation occurs at threonine 23. A disulfide bridge links cysteine 78 with cysteine 125. A glycan (N-linked (GlcNAc...) asparagine) is linked at asparagine 111.

This sequence belongs to the IL-2 family.

The protein resides in the secreted. Its function is as follows. Cytokine produced by activated CD4-positive helper T-cells and to a lesser extend activated CD8-positive T-cells and natural killer (NK) cells that plays pivotal roles in the immune response and tolerance. Binds to a receptor complex composed of either the high-affinity trimeric IL-2R (IL2RA/CD25, IL2RB/CD122 and IL2RG/CD132) or the low-affinity dimeric IL-2R (IL2RB and IL2RG). Interaction with the receptor leads to oligomerization and conformation changes in the IL-2R subunits resulting in downstream signaling starting with phosphorylation of JAK1 and JAK3. In turn, JAK1 and JAK3 phosphorylate the receptor to form a docking site leading to the phosphorylation of several substrates including STAT5. This process leads to activation of several pathways including STAT, phosphoinositide-3-kinase/PI3K and mitogen-activated protein kinase/MAPK pathways. Functions as a T-cell growth factor and can increase NK-cell cytolytic activity as well. Promotes strong proliferation of activated B-cells and subsequently immunoglobulin production. Plays a pivotal role in regulating the adaptive immune system by controlling the survival and proliferation of regulatory T-cells, which are required for the maintenance of immune tolerance. Moreover, participates in the differentiation and homeostasis of effector T-cell subsets, including Th1, Th2, Th17 as well as memory CD8-positive T-cells. The protein is Interleukin-2 (IL2) of Oryctolagus cuniculus (Rabbit).